A 142-amino-acid chain; its full sequence is Large ribosomal subunit protein uL11 (142 aa).

Belongs to the universal ribosomal protein uL11 family. In terms of assembly, part of the ribosomal stalk of the 50S ribosomal subunit. Interacts with L10 and the large rRNA to form the base of the stalk. L10 forms an elongated spine to which L12 dimers bind in a sequential fashion forming a multimeric L10(L12)X complex. In terms of processing, one or more lysine residues are methylated.

Forms part of the ribosomal stalk which helps the ribosome interact with GTP-bound translation factors. The polypeptide is Large ribosomal subunit protein uL11 (Shewanella halifaxensis (strain HAW-EB4)).